The chain runs to 497 residues: D-gluconate dehydratase (497 aa).

Mg(2+) is bound at residue E303. The Proton donor role is filled by H305. 2 residues coordinate Mg(2+): E329 and E355. H405 acts as the Proton acceptor in catalysis.

It belongs to the mandelate racemase/muconate lactonizing enzyme family. GaD subfamily. The cofactor is Mg(2+).

It carries out the reaction D-gluconate = 2-dehydro-3-deoxy-D-gluconate + H2O. The protein operates within carbohydrate acid metabolism; D-gluconate degradation. In terms of biological role, involved in the degradation of glucose via the Entner-Doudoroff pathway. Catalyzes the dehydration of gluconate to produce 2-keto-3-deoxygluconate (KDG). It is not able to use D-galactonate as substrate. The polypeptide is D-gluconate dehydratase (gad) (Thermoproteus tenax).